A 151-amino-acid polypeptide reads, in one-letter code: MNYIKQFILAICFYLVLTCQDHVLARDTTTRDIVVPKISEWQVTVANGLTTGETLFIHCKSKENDLGDINLKFLDRFSWNFGENMLHSTLFWCYMSKDDGHMNVKVFWDDVILFHRCDWKNCVWTAKNDGLYLWNSAIGEDVLSEKWKSGW.

Residues 1 to 25 (MNYIKQFILAICFYLVLTCQDHVLA) form the signal peptide.

Belongs to the plant self-incompatibility (S1) protein family.

The protein resides in the secreted. In Arabidopsis thaliana (Mouse-ear cress), this protein is S-protein homolog 74.